A 311-amino-acid chain; its full sequence is HPr kinase/phosphorylase (311 aa).

Active-site residues include His-138 and Lys-159. An ATP-binding site is contributed by Gly-153–Ser-160. Mg(2+) is bound at residue Ser-160. Asp-177 acts as the Proton acceptor; for phosphorylation activity. Proton donor; for dephosphorylation activity in catalysis. The interval Leu-201–Asn-210 is important for the catalytic mechanism of both phosphorylation and dephosphorylation. A Mg(2+)-binding site is contributed by Glu-202. The active site involves Arg-243. The segment at Pro-264 to Arg-269 is important for the catalytic mechanism of dephosphorylation.

Belongs to the HPrK/P family. As to quaternary structure, homohexamer. Mg(2+) is required as a cofactor.

It catalyses the reaction [HPr protein]-L-serine + ATP = [HPr protein]-O-phospho-L-serine + ADP + H(+). The catalysed reaction is [HPr protein]-O-phospho-L-serine + phosphate + H(+) = [HPr protein]-L-serine + diphosphate. Catalyzes the ATP- as well as the pyrophosphate-dependent phosphorylation of a specific serine residue in HPr, a phosphocarrier protein of the phosphoenolpyruvate-dependent sugar phosphotransferase system (PTS). HprK/P also catalyzes the pyrophosphate-producing, inorganic phosphate-dependent dephosphorylation (phosphorolysis) of seryl-phosphorylated HPr (P-Ser-HPr). The two antagonistic activities of HprK/P are regulated by several intracellular metabolites, which change their concentration in response to the absence or presence of rapidly metabolisable carbon sources (glucose, fructose, etc.) in the growth medium. Also phosphorylates/dephosphorylates the HPr-like catabolite repression protein crh on a specific serine residue. Therefore, by controlling the phosphorylation state of HPr and crh, HPrK/P is a sensor enzyme that plays a major role in the regulation of carbon metabolism and sugar transport: it mediates carbon catabolite repression (CCR), and regulates PTS-catalyzed carbohydrate uptake and inducer exclusion. In Geobacillus kaustophilus (strain HTA426), this protein is HPr kinase/phosphorylase.